The chain runs to 2049 residues: Polyunsaturated fatty acid synthase subunit B (2049 aa).

Ketosynthase family 3 (KS3) domains follow at residues 15 to 442 (EKRI…VFEE) and 468 to 908 (NMRI…LLSD). Active-site for beta-ketoacyl synthase 1 activity residues include Cys196, His333, and His368. The chain length factor (CLF) domain stretch occupies residues 467–984 (NNMRIAITGM…LGETLAQEAD (518 aa)). The tract at residues 1044–1377 (RVAFMYGEGR…QRSHVTGAMD (334 aa)) is acyltransferase (AT) domain. The tract at residues 1500-1531 (NKDNQPAVAPAATAAPTPKPKPAASSGKPVPS) is disordered. Low complexity predominate over residues 1505 to 1531 (PAVAPAATAAPTPKPKPAASSGKPVPS). Residues 1579–1887 (SRAFMKTYGV…SRANKLYELF (309 aa)) are enoyl reductase (ER) domain.

As to quaternary structure, component of the polyunsaturated fatty acid synthase complex composed of at least ORF-A, ORF-B and ORF-C.

It functions in the pathway lipid metabolism; fatty acid biosynthesis. Its function is as follows. Poliketide synthase-like protein; part of the polyunsaturated fatty acid synthase composed of the 3 PKS-like subunits A, B and C. While the saturated fatty acids (SFAs) in Thraustochytrium are produced by the conventional fatty acid synthase (FAS) pathway, polyunsaturated fatty acids (PUFAs) including docosahexeanoic acid (DHA) and docosapentaenoic acid (DPA) are synthesized via an anaerobical PKS pathway. PUFA synthase assimilates fatty acyl-CoA, the product of FAS, as the starter unit to synthesize DPA, and this starter unit may be butyryl-CoA, hexanoyl-CoA, or octanoyl-CoA. DPA and DHA biosynthesis seem to differ by the reduction at the N-3 position by PUFA synthase, not the extension of carbon chain. In DHA biosynthesis, PUFA synthase extends the fatty acyl chain from the methyl toward the carboxyl end, and the double bond is formed when the carbon chain is growing, instead of afterward. Therefore, PUFA synthase is unable to transform DPA to DHA, suggesting that DPA is not the precursor of DHA. Moreover, DPA molecule is partly extended by FAS KS domain, so DPA biosynthesis is less dependent on PUFA synthase KS domain than DHA. This is Polyunsaturated fatty acid synthase subunit B from Thraustochytrium sp. (strain ATCC 26185 / S-3).